We begin with the raw amino-acid sequence, 219 residues long: Elongation factor Ts, chloroplastic (219 aa).

It belongs to the EF-Ts family.

The protein resides in the plastid. Its subcellular location is the chloroplast. In terms of biological role, associates with the EF-Tu.GDP complex and induces the exchange of GDP to GTP. It remains bound to the aminoacyl-tRNA.EF-Tu.GTP complex up to the GTP hydrolysis stage on the ribosome. This Rhodomonas salina (Cryptomonas salina) protein is Elongation factor Ts, chloroplastic (tsf).